The following is an 86-amino-acid chain: Cell division topological specificity factor (86 aa).

The protein belongs to the MinE family.

Functionally, prevents the cell division inhibition by proteins MinC and MinD at internal division sites while permitting inhibition at polar sites. This ensures cell division at the proper site by restricting the formation of a division septum at the midpoint of the long axis of the cell. The polypeptide is Cell division topological specificity factor (Shewanella frigidimarina (strain NCIMB 400)).